We begin with the raw amino-acid sequence, 212 residues long: ER lumen protein-retaining receptor 2 (212 aa).

The Lumenal segment spans residues 1–4 (MNIF). A helical membrane pass occupies residues 5 to 24 (RLTGDLSHLAAIIILLLKIW). The Cytoplasmic portion of the chain corresponds to 25–32 (KSRSCAGI). Residues 33–52 (SGKSQILFALVFTTRYLDLL) form a helical membrane-spanning segment. Residues 47 to 48 (RY) are interaction with the K-D-E-L motif on target proteins. The Lumenal segment spans residues 53 to 58 (TSFISL). The chain crosses the membrane as a helical span at residues 59-79 (YNTCMKVIYIGCAYATVYLIY). Residues 80-92 (AKFRATYDGNHDT) lie on the Cytoplasmic side of the membrane. A helical membrane pass occupies residues 93–110 (FRAEFLVVPVGGLAFLVN). Over 111-116 (HDFSPL) the chain is Lumenal. A helical membrane pass occupies residues 117–135 (EILWTFSIYLESVAILPQL). Over 136 to 149 (FMISKTGEAETITT) the chain is Cytoplasmic. Residues 150–168 (HYLFCLGVYRALYLFNWIW) form a helical membrane-spanning segment. An interaction with the K-D-E-L motif on target proteins region spans residues 159–169 (RALYLFNWIWR). Residues 169-178 (RFYFEGFFDM) lie on the Lumenal side of the membrane. Residues 179–199 (IAIVAGVVQTILYCDFFYLYV) traverse the membrane as a helical segment. Residues 200–212 (TKVLKGKKLSLPA) lie on the Cytoplasmic side of the membrane. The tract at residues 204-207 (KGKK) is important for recycling of cargo proteins with the sequence motif K-D-E-L from the Golgi to the endoplasmic reticulum.

It belongs to the ERD2 family.

The protein resides in the endoplasmic reticulum membrane. Its subcellular location is the golgi apparatus membrane. It localises to the cytoplasmic vesicle. The protein localises to the COPI-coated vesicle membrane. In terms of biological role, receptor for the C-terminal sequence motif K-D-E-L that is present on endoplasmic reticulum resident proteins and that mediates their recycling from the Golgi back to the endoplasmic reticulum. Binding is pH dependent, and is optimal at pH 5-5.4. This chain is ER lumen protein-retaining receptor 2 (kdelr2), found in Danio rerio (Zebrafish).